Here is a 139-residue protein sequence, read N- to C-terminus: Protein PsiE homolog (139 aa).

The next 4 membrane-spanning stretches (helical) occupy residues Ile-20–Ile-40, Ala-60–Phe-80, His-85–Val-105, and Val-111–Leu-131.

The protein belongs to the PsiE family.

Its subcellular location is the cell inner membrane. This chain is Protein PsiE homolog, found in Haemophilus influenzae (strain 86-028NP).